A 165-amino-acid polypeptide reads, in one-letter code: NADPH-dependent 7-cyano-7-deazaguanine reductase (165 aa).

C56 serves as the catalytic Thioimide intermediate. Catalysis depends on D63, which acts as the Proton donor. Substrate is bound by residues 78-80 and 97-98; these read VES and HE.

Belongs to the GTP cyclohydrolase I family. QueF type 1 subfamily.

It localises to the cytoplasm. The enzyme catalyses 7-aminomethyl-7-carbaguanine + 2 NADP(+) = 7-cyano-7-deazaguanine + 2 NADPH + 3 H(+). The protein operates within tRNA modification; tRNA-queuosine biosynthesis. Its function is as follows. Catalyzes the NADPH-dependent reduction of 7-cyano-7-deazaguanine (preQ0) to 7-aminomethyl-7-deazaguanine (preQ1). The protein is NADPH-dependent 7-cyano-7-deazaguanine reductase of Bacillus cereus (strain ATCC 14579 / DSM 31 / CCUG 7414 / JCM 2152 / NBRC 15305 / NCIMB 9373 / NCTC 2599 / NRRL B-3711).